The primary structure comprises 94 residues: Lipolysis-activating peptide 1-beta chain (94 aa).

The N-terminal stretch at 1–19 (MKILAVVLISVIVLNTANG) is a signal peptide. An LCN-type CS-alpha/beta domain is found at 20 to 87 (ENYYPQKYTN…YFNALESQCP (68 aa)). 3 disulfides stabilise this stretch: Cys34/Cys56, Cys42/Cys66, and Cys46/Cys68.

The protein belongs to the long (3 C-C) scorpion toxin superfamily. Homodimer; disulfide-linked or monomer (edited version) or heterodimer of an alpha chain (AC P0CI44 or AC P0CI45) and this beta chain (non-edited version). Expressed by the venom gland.

It localises to the secreted. In terms of biological role, the homodimer inhibits HMG-CoA reductase (HMGCR) (32% of inhibition produced by 0.6 uM), a glycoprotein involved in the control of cholesterol biosynthesis. The inhibitory effects of bumarsin are seen at much lower concentrations (0.6 uM) than that for statins such as atorvastatin (5 mM) and simvastatin (10 uM). In addition to inhibition of HMG-CoA reductase, this protein lowers cholesterol levels by inducing steroid hormone synthesis via StAR, and by increasing reverse cholesterol transport mediated by the induction of ABCA1 and APOA1. The heterodimer non-edited LVP1 induces lipolysis in rat adipocytes. Induction of lipolysis by LVP1 appears to be mediated through the beta-2 adrenergic receptor pathway (ADRB2). Its function is as follows. The monomer edited version, similar to alpha-toxins, may modulate voltage-gated sodium channels (Nav) and may block voltage-gated potassium channels (Kv). This Lychas mucronatus (Chinese swimming scorpion) protein is Lipolysis-activating peptide 1-beta chain.